Reading from the N-terminus, the 300-residue chain is Porphobilinogen deaminase (300 aa).

S-(dipyrrolylmethanemethyl)cysteine is present on C241.

Belongs to the HMBS family. As to quaternary structure, monomer. Dipyrromethane is required as a cofactor.

The catalysed reaction is 4 porphobilinogen + H2O = hydroxymethylbilane + 4 NH4(+). The protein operates within porphyrin-containing compound metabolism; protoporphyrin-IX biosynthesis; coproporphyrinogen-III from 5-aminolevulinate: step 2/4. In terms of biological role, tetrapolymerization of the monopyrrole PBG into the hydroxymethylbilane pre-uroporphyrinogen in several discrete steps. In Sorangium cellulosum (strain So ce56) (Polyangium cellulosum (strain So ce56)), this protein is Porphobilinogen deaminase.